A 152-amino-acid chain; its full sequence is MIALIQRVRRAEVRVADRVTGAIEAGLLALVCAERGDSEAAADRLLAKVLGYRVFSDAAGKMNLSVQNLDGAGRAGGLLLVSQFTLAADTNSGLRPSFTPAAPPDEGKRLFDYFVAAARAKHPIVETGEFGADMQVSLVNDGPVTFWLQTNA.

The Gly-cisPro motif, important for rejection of L-amino acids signature appears at Gly-142–Pro-143.

Belongs to the DTD family. Homodimer.

The protein resides in the cytoplasm. The catalysed reaction is glycyl-tRNA(Ala) + H2O = tRNA(Ala) + glycine + H(+). It catalyses the reaction a D-aminoacyl-tRNA + H2O = a tRNA + a D-alpha-amino acid + H(+). In terms of biological role, an aminoacyl-tRNA editing enzyme that deacylates mischarged D-aminoacyl-tRNAs. Also deacylates mischarged glycyl-tRNA(Ala), protecting cells against glycine mischarging by AlaRS. Acts via tRNA-based rather than protein-based catalysis; rejects L-amino acids rather than detecting D-amino acids in the active site. By recycling D-aminoacyl-tRNA to D-amino acids and free tRNA molecules, this enzyme counteracts the toxicity associated with the formation of D-aminoacyl-tRNA entities in vivo and helps enforce protein L-homochirality. The protein is D-aminoacyl-tRNA deacylase of Paraburkholderia phytofirmans (strain DSM 17436 / LMG 22146 / PsJN) (Burkholderia phytofirmans).